The primary structure comprises 115 residues: Holo-[acyl-carrier-protein] synthase (115 aa).

Asp5 and Glu51 together coordinate Mg(2+).

It belongs to the P-Pant transferase superfamily. AcpS family. Mg(2+) serves as cofactor.

The protein resides in the cytoplasm. It carries out the reaction apo-[ACP] + CoA = holo-[ACP] + adenosine 3',5'-bisphosphate + H(+). Functionally, transfers the 4'-phosphopantetheine moiety from coenzyme A to a Ser of acyl-carrier-protein. The protein is Holo-[acyl-carrier-protein] synthase of Helicobacter acinonychis (strain Sheeba).